The sequence spans 635 residues: Isethionate TRAP transporter permease protein DctMQ (635 aa).

16 helical membrane passes run 38–58 (KPFL…QTLY), 75–95 (TEEM…PVAI), 117–137 (ISWI…LWQS), 154–174 (LQLP…LMAV), 192–212 (TVIG…ADYI), 217–237 (VLFG…IGLG), 266–286 (FPIM…AGGL), 299–319 (GALP…FAAI), 350–370 (AIVA…PFVV), 379–399 (IGKL…ALMA), 431–451 (WALM…MTPT), 453–473 (AAAL…RELS), 481–501 (VVEA…ATIF), 526–546 (IAIL…MEAL), 572–592 (IIMV…VNLF), and 609–629 (VLPL…VPAI).

This sequence in the N-terminal section; belongs to the TRAP transporter small permease family. In the C-terminal section; belongs to the TRAP transporter large permease family. As to quaternary structure, the complex comprises the periplasmic solute receptor protein DctP, and the fused transmembrane protein DctMQ.

It localises to the cell inner membrane. The protein operates within organosulfur degradation; alkanesulfonate degradation. In terms of biological role, part of the tripartite ATP-independent periplasmic (TRAP) transport system DctPQM involved in the uptake of isethionate (2-hydroxyethanesulfonate), which is then catabolized by enzymes encoded by adjacent genes in the locus. Thereby is involved in an anaerobic respiration pathway that converts the sulfonate isethionate to ammonia, acetate and sulfide. The chain is Isethionate TRAP transporter permease protein DctMQ from Oleidesulfovibrio alaskensis (strain ATCC BAA-1058 / DSM 17464 / G20) (Desulfovibrio alaskensis).